The chain runs to 100 residues: MQFYTIVSLFLAGTAYALPATSANGYEACPSGGLFGNPQCCSLNLVGVLSGDCRAPTKTPNSAKEFQAICAESGQKARCCGLSEILELGAFCQKPVGVSA.

A signal peptide spans methionine 1–alanine 17. 4 cysteine pairs are disulfide-bonded: cysteine 29/cysteine 79, cysteine 40/cysteine 70, cysteine 41/cysteine 53, and cysteine 80/cysteine 92.

The protein belongs to the cerato-ulmin hydrophobin family. Homodimer. Homodimers further self-assemble to form highly ordered films at water-air interfaces through intermolecular interactions.

The protein resides in the secreted. It localises to the cell wall. Its function is as follows. Aerial growth, conidiation, and dispersal of filamentous fungi in the environment rely upon a capability of their secreting small amphipathic proteins called hydrophobins (HPBs) with low sequence identity. Class I can self-assemble into an outermost layer of rodlet bundles on aerial cell surfaces, conferring cellular hydrophobicity that supports fungal growth, development and dispersal; whereas Class II form highly ordered films at water-air interfaces through intermolecular interactions but contribute nothing to the rodlet structure. FOXG_02746 is a class II hydrophobin that is likely required for plant colonization. The chain is Class II hydrophobin FOXG_02746 from Fusarium oxysporum f. sp. lycopersici (strain 4287 / CBS 123668 / FGSC 9935 / NRRL 34936) (Fusarium vascular wilt of tomato).